Here is a 436-residue protein sequence, read N- to C-terminus: MSRTPRSFCGHAFHMQSLSQFDTQTMRSLHPISSGTQSGDQTARSLHSFLINHIPDELLGQTAFVPWEPANRIWRAQAQSTWQEITYTIKVIQSEIATRIYFGKRWLLNTLRNVFFLERPVRVCLTAPEVLCVAAGFGLEQITRVGLPIVAVSSALQALLYRNISPDICMSTDGSFWAAEHFPPAPTLPVLFPLEACIPPRVFKYSPISLLNYHSHTEHFFLQHLHIPSVSAQRHGSVMGTALEYLLQCGVHSIYLAGLDLHPGKGFQHARPHASFKRFNPKRTEPLATCIAGNFDNRSLETYAHWFYSLPQEKIQKLTRLNTEHAPPSNVRTITYEDFSQHAFAKKDTFTFSEGPPISRIHKKAVLRHYFERITRSAHHARIASSIASSGIEKEAFEFLAYAELLHLRKNPSQGTQTLIHKVRHEIVQLRNKLSI.

This is an uncharacterized protein from Treponema pallidum (strain Nichols).